The sequence spans 392 residues: tRNA (guanine-N(7)-)-methyltransferase (392 aa).

S-adenosyl-L-methionine is bound by residues glutamate 123, glutamate 148, and aspartate 175. Residues lysine 201 and aspartate 231 each contribute to the substrate site.

The protein belongs to the class I-like SAM-binding methyltransferase superfamily. TrmB family.

The catalysed reaction is guanosine(46) in tRNA + S-adenosyl-L-methionine = N(7)-methylguanosine(46) in tRNA + S-adenosyl-L-homocysteine. The protein operates within tRNA modification; N(7)-methylguanine-tRNA biosynthesis. Its function is as follows. Catalyzes the formation of N(7)-methylguanine at position 46 (m7G46) in tRNA. The protein is tRNA (guanine-N(7)-)-methyltransferase of Campylobacter jejuni subsp. jejuni serotype O:2 (strain ATCC 700819 / NCTC 11168).